We begin with the raw amino-acid sequence, 782 residues long: Endonuclease MutS2 (782 aa).

336–343 contributes to the ATP binding site; sequence GPNTGGKT. The region spanning 707 to 782 is the Smr domain; the sequence is LDLRGYRYED…GFGVTVATLK (76 aa).

Belongs to the DNA mismatch repair MutS family. MutS2 subfamily. As to quaternary structure, homodimer. Binds to stalled ribosomes, contacting rRNA.

Functionally, endonuclease that is involved in the suppression of homologous recombination and thus may have a key role in the control of bacterial genetic diversity. In terms of biological role, acts as a ribosome collision sensor, splitting the ribosome into its 2 subunits. Detects stalled/collided 70S ribosomes which it binds and splits by an ATP-hydrolysis driven conformational change. Acts upstream of the ribosome quality control system (RQC), a ribosome-associated complex that mediates the extraction of incompletely synthesized nascent chains from stalled ribosomes and their subsequent degradation. Probably generates substrates for RQC. This chain is Endonuclease MutS2, found in Staphylococcus aureus (strain bovine RF122 / ET3-1).